A 268-amino-acid chain; its full sequence is Single-stranded DNA-binding protein WHY3, chloroplastic (268 aa).

The N-terminal 75 residues, Met-1 to Ser-75, are a transit peptide targeting the chloroplast. Residues Lys-93 to Leu-98 are required for ssDNA binding. The Nuclear localization signal motif lies at Lys-171–Lys-185.

Belongs to the Whirly family. Homotetramer.

The protein resides in the plastid. The protein localises to the chloroplast. It localises to the nucleus. Its function is as follows. Single-stranded DNA-binding protein that functions in both chloroplasts and nucleus. In chloroplasts, maintains plastid genome stability by preventing break-induced and short homology-dependent illegitimate recombinations. In the nucleus, is recruited to a distal element upstream of the kinesin KP1 to mediate the transcriptional repression of KP1. Can bind double-stranded DNA in vivo. This chain is Single-stranded DNA-binding protein WHY3, chloroplastic (WHY3), found in Arabidopsis thaliana (Mouse-ear cress).